A 278-amino-acid polypeptide reads, in one-letter code: Cytoplasmic envelopment protein 1 (278 aa).

This sequence belongs to the herpesviridae cytoplasmic envelopment protein 1 family. Interacts with BSRF1 tegument protein; the BBRF2-BSRF1 complexes oligomerize and might play a role in tethering the viral nucleocapsids to the host Golgi membrane during secondary envelopment.

It is found in the virion. Its subcellular location is the virion tegument. The protein localises to the host cytoplasm. The protein resides in the host Golgi apparatus. Plays a critical role in cytoplasmic virus egress. Participates in the final step of tegumentation and envelope acquisition within the host cytoplasm. The chain is Cytoplasmic envelopment protein 1 from Homo sapiens (Human).